The chain runs to 510 residues: 2,3-bisphosphoglycerate-independent phosphoglycerate mutase (510 aa).

The Mn(2+) site is built by Asp10 and Ser60. Ser60 (phosphoserine intermediate) is an active-site residue. Substrate-binding positions include His121, 150–151, Arg182, Arg188, 252–255, and Lys325; these read RD and RPDR. Mn(2+) contacts are provided by Asp392, His396, Asp433, His434, and His451.

This sequence belongs to the BPG-independent phosphoglycerate mutase family. Mn(2+) is required as a cofactor.

The protein localises to the plastid. It localises to the chloroplast. It catalyses the reaction (2R)-2-phosphoglycerate = (2R)-3-phosphoglycerate. The protein operates within carbohydrate degradation; glycolysis; pyruvate from D-glyceraldehyde 3-phosphate: step 3/5. Catalyzes the interconversion of 2-phosphoglycerate and 3-phosphoglycerate. This chain is 2,3-bisphosphoglycerate-independent phosphoglycerate mutase, found in Gracilaria tenuistipitata var. liui (Red alga).